A 570-amino-acid polypeptide reads, in one-letter code: MAPLFILTETAAGLVLFKADKKLLKKDDVASEIETAEGINGLLKLKQFQKFDSAATALEEVASLVEGKVSPMLAKLLDTLKDEKKASLAVADPKLGQAINKLPGLTLTPISDSKTNDIFRGIRDHLPSLIPGLLPEHISTMSLGLSHSLSRHKLKFSPDKVDTMIVQAISLLDDLDKELNTYAMRVKEWYGWHFPEMGKIVNDNLAYARVILKVGMRVNTSSTDLADILPEEIEAAIKAAAEVSMGTEITEEDLDNIKLLAEQVVGFTEYRQQLSSYLSARMQAIAPNLTELVGELVGARLIAHAGSLMNLAKSPASTIQILGAEKALFRALKTKHDTPKYGLIYHASLVGQATGKNKGKIARMLAAKAAIGLRVDALSDWSAQGEGKGDDVDDEERSALGVTSRAKIERHLRGIEGKPLLPRGVAVGPNGKTTSAPGKWEVKEARKYNADADGLAGDEPAAAIPVREKKNKKLIEEVAEKSDSDSSDESDASEKKSKKGDKEAKKAEKAAKKAEKAAKKAAKAAKKAVKEAKEVKKSAVNDTPEVNGKKRKSEDDGEKSEKKKKKKNKD.

In terms of domain architecture, Nop spans 285 to 417 (IAPNLTELVG…IERHLRGIEG (133 aa)). Disordered stretches follow at residues 451–470 (DADG…REKK) and 475–570 (IEEV…KNKD). 3 stretches are compositionally biased toward basic and acidic residues: residues 475–484 (IEEVAEKSDS), 492–518 (ASEK…EKAA), and 528–539 (AVKEAKEVKKSA).

The protein belongs to the NOP5/NOP56 family.

It is found in the nucleus. Its subcellular location is the nucleolus. Its function is as follows. Required for pre-18S rRNA processing. May bind microtubules. The sequence is that of Nucleolar protein 58 (NOP58) from Sclerotinia sclerotiorum (strain ATCC 18683 / 1980 / Ss-1) (White mold).